We begin with the raw amino-acid sequence, 55 residues long: Large ribosomal subunit protein bL33 (55 aa).

This sequence belongs to the bacterial ribosomal protein bL33 family.

The polypeptide is Large ribosomal subunit protein bL33 (Mesorhizobium japonicum (strain LMG 29417 / CECT 9101 / MAFF 303099) (Mesorhizobium loti (strain MAFF 303099))).